Reading from the N-terminus, the 382-residue chain is Palmitoyltransferase ZDHHC16B (382 aa).

Over 1 to 75 (MRSWRWSVSR…IYWLVDNMTR (75 aa)) the chain is Cytoplasmic. The helical transmembrane segment at 76–96 (WFGVVFVCLVMALTSSVVVIV) threads the bilayer. Topologically, residues 97-107 (YLCVLPIIFSS) are lumenal. The helical transmembrane segment at 108–130 (YPVYWILWHLCYGHWNLLMVVFH) threads the bilayer. The Cytoplasmic segment spans residues 131–196 (YYKATTTQPG…NNCVGHFNHR (66 aa)). In terms of domain architecture, DHHC spans 153 to 203 (TICKKCIVPKPARTHHCSICNRCILKMDHHCPWLNNCVGHFNHRYFFSFCL). Residue Cys-183 is the S-palmitoyl cysteine intermediate of the active site. Residues 197 to 217 (YFFSFCLFMTMGCVYCSISAK) form a helical membrane-spanning segment. At 218-275 (DMFLDAYNAIESGRYKGGASQGEAVPGAGLIYISFQHQSSYQTPPPAFTHQERMVHKS) the chain is on the lumenal side. The helical transmembrane segment at 276 to 296 (LVYLWVLTSSVAVALGALTLW) threads the bilayer. Topologically, residues 297–382 (HAILITRGET…PAYKSSTTAI (86 aa)) are cytoplasmic.

Belongs to the DHHC palmitoyltransferase family.

The protein resides in the endoplasmic reticulum membrane. It catalyses the reaction L-cysteinyl-[protein] + hexadecanoyl-CoA = S-hexadecanoyl-L-cysteinyl-[protein] + CoA. Palmitoyl acyltransferase that mediates palmitoylation of proteins and is required during embryonic heart development. Involved in the proliferation of neural stem cells by regulating the FGF/ERK pathway. The protein is Palmitoyltransferase ZDHHC16B of Danio rerio (Zebrafish).